The following is a 173-amino-acid chain: Peptide deformylase (173 aa).

Fe cation contacts are provided by cysteine 98 and histidine 140. Glutamate 141 is an active-site residue. Position 144 (histidine 144) interacts with Fe cation.

This sequence belongs to the polypeptide deformylase family. Requires Fe(2+) as cofactor.

The enzyme catalyses N-terminal N-formyl-L-methionyl-[peptide] + H2O = N-terminal L-methionyl-[peptide] + formate. In terms of biological role, removes the formyl group from the N-terminal Met of newly synthesized proteins. Requires at least a dipeptide for an efficient rate of reaction. N-terminal L-methionine is a prerequisite for activity but the enzyme has broad specificity at other positions. This is Peptide deformylase from Caulobacter vibrioides (strain ATCC 19089 / CIP 103742 / CB 15) (Caulobacter crescentus).